Reading from the N-terminus, the 72-residue chain is MAEVLDLEIDPISDGEDDTYSSELDDDLKDSIEQLERVLCLVVFPLLGKFLGRKFAFHAWARWLERRRLVSN.

Residues 1-22 (MAEVLDLEIDPISDGEDDTYSS) form a disordered region. At 1–34 (MAEVLDLEIDPISDGEDDTYSSELDDDLKDSIEQ) the chain is on the cytoplasmic side. Residues 35-52 (LERVLCLVVFPLLGKFLG) form a helical membrane-spanning segment. Residues 53–72 (RKFAFHAWARWLERRRLVSN) lie on the Mitochondrial intermembrane side of the membrane.

Belongs to the MIM2 family. As to quaternary structure, component of the mitochondrial outer import machinery (MIM) complex containing at least mim1 and mim2. Interacts with mim1. Interacts with mitophagy receptor atg43.

It is found in the mitochondrion outer membrane. Component of the mitochondrial outer import machinery (MIM) complex that mediates transport of proteins into mitochondrial compartments. Promotes the insertion of tom70 into the outer mitochondrial membrane. Promotes the insertion of atg43 into the outer mitochondrial membrane. Involved in import of the subset of proteins with multiple alpha-helical transmembrane segments. In Schizosaccharomyces pombe (strain 972 / ATCC 24843) (Fission yeast), this protein is Mitochondrial import protein 2.